The following is a 719-amino-acid chain: Anaphase-promoting complex subunit 4 (719 aa).

The stretch at 57–96 (NSQRIWDVDFHDLEATELCWNHDGNLIVVGFKNGELKIID) is one WD repeat.

In terms of assembly, the APC/C is composed of at least 13 subunits: apc1, apc2, nuc2, apc4, apc5, cut9, apc8, apc10, apc11, hcn1, apc13, apc14 and apc15. Interacts with apc1 and dim1.

Component of the anaphase-promoting complex/cyclosome (APC/C), a cell cycle-regulated E3 ubiquitin-protein ligase complex that controls progression through mitosis and the G1 phase of the cell cycle. The APC/C is thought to confer substrate specificity and, in the presence of ubiquitin-conjugating E2 enzymes, it catalyzes the formation of protein-ubiquitin conjugates that are subsequently degraded by the 26S proteasome. Has a role in promoting metaphase to anaphase transition via the ubiquitination of specific mitotic substrates. The chain is Anaphase-promoting complex subunit 4 (cut20) from Schizosaccharomyces pombe (strain 972 / ATCC 24843) (Fission yeast).